A 139-amino-acid chain; its full sequence is Antitoxin HicB 2 (139 aa).

Positions methionine 87–valine 137 constitute an HTH cro/C1-type domain. The H-T-H motif DNA-binding region spans glutamate 96 to serine 113.

This sequence belongs to the HicB antitoxin family. In terms of assembly, probably forms a complex with the probable mRNA interferase HicA2 (its cognate toxin); when complexed with HicA inhibits the toxin activity.

In terms of biological role, antitoxin component of a type II toxin-antitoxin (TA) system. Functions as an mRNA interferase antitoxin preventing effects of the HicA 2 toxin. In Photorhabdus laumondii subsp. laumondii (strain DSM 15139 / CIP 105565 / TT01) (Photorhabdus luminescens subsp. laumondii), this protein is Antitoxin HicB 2 (hicB2).